The chain runs to 396 residues: 1-deoxy-D-xylulose 5-phosphate reductoisomerase (396 aa).

5 residues coordinate NADPH: Thr-13, Gly-14, Ser-15, Ile-16, and Asn-127. Residue Lys-128 coordinates 1-deoxy-D-xylulose 5-phosphate. An NADPH-binding site is contributed by Glu-129. Position 153 (Asp-153) interacts with Mn(2+). The 1-deoxy-D-xylulose 5-phosphate site is built by Ser-154, Glu-155, Ser-184, and His-207. Glu-155 contributes to the Mn(2+) binding site. Gly-213 provides a ligand contact to NADPH. 1-deoxy-D-xylulose 5-phosphate-binding residues include Ser-220, Asn-225, Lys-226, and Glu-229. Glu-229 contributes to the Mn(2+) binding site.

Belongs to the DXR family. It depends on Mg(2+) as a cofactor. Requires Mn(2+) as cofactor.

The catalysed reaction is 2-C-methyl-D-erythritol 4-phosphate + NADP(+) = 1-deoxy-D-xylulose 5-phosphate + NADPH + H(+). It participates in isoprenoid biosynthesis; isopentenyl diphosphate biosynthesis via DXP pathway; isopentenyl diphosphate from 1-deoxy-D-xylulose 5-phosphate: step 1/6. Inhibited by fosmidomycin and 3-(N-acetyl-N-hydroxyamino)-propylphosphonic acid (FR-900098). In terms of biological role, catalyzes the NADPH-dependent rearrangement and reduction of 1-deoxy-D-xylulose-5-phosphate (DXP) to 2-C-methyl-D-erythritol 4-phosphate (MEP). In Pseudomonas aeruginosa (strain ATCC 15692 / DSM 22644 / CIP 104116 / JCM 14847 / LMG 12228 / 1C / PRS 101 / PAO1), this protein is 1-deoxy-D-xylulose 5-phosphate reductoisomerase.